Here is a 177-residue protein sequence, read N- to C-terminus: Inorganic pyrophosphatase (177 aa).

Substrate contacts are provided by K30, R44, and Y56. Mg(2+) is bound by residues D66, D71, and D103. A substrate-binding site is contributed by Y142.

This sequence belongs to the PPase family. Homohexamer. Requires Mg(2+) as cofactor.

The protein localises to the cytoplasm. The catalysed reaction is diphosphate + H2O = 2 phosphate + H(+). Its function is as follows. Catalyzes the hydrolysis of inorganic pyrophosphate (PPi) forming two phosphate ions. This Agrobacterium fabrum (strain C58 / ATCC 33970) (Agrobacterium tumefaciens (strain C58)) protein is Inorganic pyrophosphatase.